The primary structure comprises 318 residues: Galactinol synthase 1 (318 aa).

Residue Lys102 is part of the active site. 3 residues coordinate Mn(2+): Asp118, Asp120, and His244.

It belongs to the glycosyltransferase 8 family. Galactosyltransferase subfamily. A divalent metal cation serves as cofactor. As to expression, expressed in seeds, mostly in radicle tips.

It is found in the cytoplasm. The enzyme catalyses myo-inositol + UDP-alpha-D-galactose = alpha-D-galactosyl-(1-&gt;3)-1D-myo-inositol + UDP + H(+). In terms of biological role, galactinol synthase involved in the biosynthesis of raffinose family oligosaccharides (RFOs) that function as osmoprotectants. May promote plant stress tolerance. The chain is Galactinol synthase 1 (GOLS1) from Solanum lycopersicum (Tomato).